The primary structure comprises 283 residues: MQIITEPQTIQQACLRWRADGVHTALVPTMGYYHAGHESLMAHARAVSEKVIVSLFVNPAQFGPGEDFAAYPRDLERDAAMAEAQGVDVLFAPKAEDLYKKDHATWVEVPALSQTMCGLSRPTHFRGVCTVVTKLLMLTMPRIAVFGQKDWQQVAVIRRMVRDLNIPVDIVGRPIVREPDGLAMSSRNIYLTAEERLQAPHIHHGLALGRAITQSGERDAETIKTAIRRYWAQNLPGGEEDYLTIVDPVSLEPVDRLTGATLCATAVRVGQARLLDNMMLLGD.

30–37 serves as a coordination point for ATP; the sequence is MGYYHAGH. H37 (proton donor) is an active-site residue. A (R)-pantoate-binding site is contributed by Q61. Q61 contacts beta-alanine. 147-150 lines the ATP pocket; that stretch reads GQKD. A (R)-pantoate-binding site is contributed by Q153. Residues V176 and 184 to 187 contribute to the ATP site; that span reads MSSR.

This sequence belongs to the pantothenate synthetase family. As to quaternary structure, homodimer.

The protein localises to the cytoplasm. The catalysed reaction is (R)-pantoate + beta-alanine + ATP = (R)-pantothenate + AMP + diphosphate + H(+). Its pathway is cofactor biosynthesis; (R)-pantothenate biosynthesis; (R)-pantothenate from (R)-pantoate and beta-alanine: step 1/1. Its function is as follows. Catalyzes the condensation of pantoate with beta-alanine in an ATP-dependent reaction via a pantoyl-adenylate intermediate. This chain is Pantothenate synthetase, found in Nitratidesulfovibrio vulgaris (strain ATCC 29579 / DSM 644 / CCUG 34227 / NCIMB 8303 / VKM B-1760 / Hildenborough) (Desulfovibrio vulgaris).